A 953-amino-acid chain; its full sequence is 26S proteasome non-ATPase regulatory subunit 1 (953 aa).

Met1 carries the post-translational modification N-acetylmethionine. Thr273 bears the Phosphothreonine mark. The disordered stretch occupies residues 279–318 (PGSTNTGTVPGSEKDSDSMETEEKTSSAFVGKTPEASPEP). Ser290 carries the post-translational modification Phosphoserine. The span at 290–303 (SEKDSDSMETEEKT) shows a compositional bias: basic and acidic residues. At Lys310 the chain carries N6-acetyllysine. Thr311 carries the post-translational modification Phosphothreonine. Ser315 carries the post-translational modification Phosphoserine. PC repeat units follow at residues 403–436 (TATA…PGSA), 441–474 (GGLY…DIVR), 476–510 (GGSL…VTGE), 511–545 (AAGL…EKIL), 547–580 (GLAV…ILRR), 581–616 (SGMY…DVRR), 617–649 (AAVE…PHVR), 651–685 (GAAM…YVRQ), 686–726 (GALI…DVMA), and 729–761 (GAIL…PSVV). N6-acetyllysine is present on Lys720. Phosphothreonine is present on Thr830. Ser834 carries the phosphoserine modification. Disordered regions lie at residues 839–881 (AKKK…LDNP) and 930–953 (AHGP…YIDD). Composition is skewed to basic and acidic residues over residues 842–852 (KEKEKEKKEEE) and 859–872 (AEKK…KEPE). Residues 936–953 (EEEEQEPEPPEPFEYIDD) show a composition bias toward acidic residues.

Belongs to the proteasome subunit S1 family. As to quaternary structure, component of the 19S proteasome regulatory particle complex. The 26S proteasome consists of a 20S core particle (CP) and two 19S regulatory subunits (RP). The regulatory particle is made of a lid composed of 9 subunits, a base containing 6 ATPases and few additional components including PSMD1. Interacts with ADRM1. Interacts with ZFAND1.

In terms of biological role, component of the 26S proteasome, a multiprotein complex involved in the ATP-dependent degradation of ubiquitinated proteins. This complex plays a key role in the maintenance of protein homeostasis by removing misfolded or damaged proteins, which could impair cellular functions, and by removing proteins whose functions are no longer required. Therefore, the proteasome participates in numerous cellular processes, including cell cycle progression, apoptosis, or DNA damage repair. This chain is 26S proteasome non-ATPase regulatory subunit 1 (PSMD1), found in Homo sapiens (Human).